A 343-amino-acid polypeptide reads, in one-letter code: Peptide methionine sulfoxide reductase msrA/msrB (343 aa).

The tract at residues 21–174 (KVIYLAGGCF…PNGYCHIDLK (154 aa)) is peptide methionine sulfoxide reductase A. C29 serves as the catalytic Cysteine sulfenic acid (-SOH) intermediate. Residues 191–314 (DEVLKKKLTQ…NSASLRFIPL (124 aa)) form the MsrB domain. The Nucleophile role is filled by C303.

The protein in the N-terminal section; belongs to the MsrA Met sulfoxide reductase family. In the C-terminal section; belongs to the MsrB Met sulfoxide reductase family.

The enzyme catalyses L-methionyl-[protein] + [thioredoxin]-disulfide + H2O = L-methionyl-(S)-S-oxide-[protein] + [thioredoxin]-dithiol. It catalyses the reaction [thioredoxin]-disulfide + L-methionine + H2O = L-methionine (S)-S-oxide + [thioredoxin]-dithiol. The catalysed reaction is L-methionyl-[protein] + [thioredoxin]-disulfide + H2O = L-methionyl-(R)-S-oxide-[protein] + [thioredoxin]-dithiol. Functionally, has an important function as a repair enzyme for proteins that have been inactivated by oxidation. Catalyzes the reversible oxidation-reduction of methionine sulfoxide in proteins to methionine. The polypeptide is Peptide methionine sulfoxide reductase msrA/msrB (Enterococcus faecalis (Streptococcus faecalis)).